The chain runs to 632 residues: tRNA-guanine(15) transglycosylase (632 aa).

D86 serves as the catalytic Nucleophile. Substrate-binding residues include D121 and G186. A PUA domain is found at 553–628 (AMRVTVSKES…IAVKVHEGRD (76 aa)).

This sequence belongs to the archaeosine tRNA-ribosyltransferase family. The cofactor is Zn(2+).

It catalyses the reaction guanosine(15) in tRNA + 7-cyano-7-deazaguanine = 7-cyano-7-carbaguanosine(15) in tRNA + guanine. Its pathway is tRNA modification; archaeosine-tRNA biosynthesis. Exchanges the guanine residue with 7-cyano-7-deazaguanine (preQ0) at position 15 in the dihydrouridine loop (D-loop) of archaeal tRNAs. The polypeptide is tRNA-guanine(15) transglycosylase (Thermoplasma acidophilum (strain ATCC 25905 / DSM 1728 / JCM 9062 / NBRC 15155 / AMRC-C165)).